We begin with the raw amino-acid sequence, 381 residues long: Lipid-A-disaccharide synthase (381 aa).

Belongs to the LpxB family.

The enzyme catalyses a lipid X + a UDP-2-N,3-O-bis[(3R)-3-hydroxyacyl]-alpha-D-glucosamine = a lipid A disaccharide + UDP + H(+). It participates in bacterial outer membrane biogenesis; LPS lipid A biosynthesis. In terms of biological role, condensation of UDP-2,3-diacylglucosamine and 2,3-diacylglucosamine-1-phosphate to form lipid A disaccharide, a precursor of lipid A, a phosphorylated glycolipid that anchors the lipopolysaccharide to the outer membrane of the cell. The chain is Lipid-A-disaccharide synthase from Solibacter usitatus (strain Ellin6076).